The sequence spans 585 residues: Aspartate--tRNA ligase (585 aa).

Glu-173 provides a ligand contact to L-aspartate. An aspartate region spans residues 197–200 (QTLK). Arg-219 is an L-aspartate binding site. Residues 219–221 (RDE) and Gln-228 each bind ATP. L-aspartate is bound at residue His-446. Glu-480 contributes to the ATP binding site. Position 487 (Arg-487) interacts with L-aspartate. 532 to 535 (GLDR) provides a ligand contact to ATP.

This sequence belongs to the class-II aminoacyl-tRNA synthetase family. Type 1 subfamily. Homodimer.

The protein resides in the cytoplasm. The catalysed reaction is tRNA(Asp) + L-aspartate + ATP = L-aspartyl-tRNA(Asp) + AMP + diphosphate. In terms of biological role, catalyzes the attachment of L-aspartate to tRNA(Asp) in a two-step reaction: L-aspartate is first activated by ATP to form Asp-AMP and then transferred to the acceptor end of tRNA(Asp). The sequence is that of Aspartate--tRNA ligase from Bacteroides fragilis (strain YCH46).